A 330-amino-acid polypeptide reads, in one-letter code: Mas-related G-protein coupled receptor member X2 (330 aa).

The Extracellular portion of the chain corresponds to 1 to 33 (MDPTTPAWGNESTTMNGNDQALPLLCGKETLIP). The helical transmembrane segment at 34 to 54 (VFLILFIALVGLVGNGFVLWL) threads the bilayer. Residues 55–63 (LGFCMRRNA) are Cytoplasmic-facing. The chain crosses the membrane as a helical span at residues 64–84 (FSVYVLSLAGADFLFLCFQLI). Topologically, residues 85 to 96 (NCLVYLSNFFCS) are extracellular. A helical transmembrane segment spans residues 97-117 (ISIDFPSFFTTVMTCAYLAGL). Over 118–144 (SMLSTISTERCLSVLWPIWYRCRRPRH) the chain is Cytoplasmic. The chain crosses the membrane as a helical span at residues 145–165 (LSAVVCVLLWALSLLLSILEG). At 166–184 (KFCGFFFSDGDSGWCQTFD) the chain is on the extracellular side. The helical transmembrane segment at 185–205 (FITAAWLIFLFMVLCGSSLAL) threads the bilayer. The Cytoplasmic segment spans residues 206 to 228 (LVRILCGSRGLPLTRLYLTILLT). The helical transmembrane segment at 229 to 249 (VLVFLLCGLPFGIQWFLILWI) threads the bilayer. At 250-264 (WENSDVLFCHIHPVS) the chain is on the extracellular side. Residues 265 to 285 (VVLSSLNSSANPIIYFFVGTF) form a helical membrane-spanning segment. The Cytoplasmic segment spans residues 286–330 (RKQWRLQQPILKLALQRALQDTAEVDHSEGCFRQGTPEMSRSSLV).

Belongs to the G-protein coupled receptor 1 family. Mas subfamily.

The protein resides in the cell membrane. Functionally, mast cell-specific receptor for basic secretagogues, i.e. cationic amphiphilic drugs, as well as endo- or exogenous peptides, consisting of a basic head group and a hydrophobic core. Recognizes and binds small molecules containing a cyclized tetrahydroisoquinoline (THIQ), such as non-steroidal neuromuscular blocking drugs (NMBDs), including tubocurarine and atracurium. In response to these compounds, mediates pseudo-allergic reactions characterized by histamine release, inflammation and airway contraction. This chain is Mas-related G-protein coupled receptor member X2 (MRGPRX2), found in Pongo pygmaeus (Bornean orangutan).